Consider the following 314-residue polypeptide: Nodulation protein D 1 (314 aa).

The HTH lysR-type domain occupies Leu6–Thr63. The segment at residues Leu23–Ala42 is a DNA-binding region (H-T-H motif).

The protein belongs to the LysR transcriptional regulatory family.

NodD regulates the expression of the nodABCFE genes which encode other nodulation proteins. NodD is also a negative regulator of its own expression. Binds flavonoids as inducers. In Bradyrhizobium sp. (strain NC92), this protein is Nodulation protein D 1 (nodD1).